We begin with the raw amino-acid sequence, 439 residues long: Indole-3-pyruvate monooxygenase YUCCA4 (439 aa).

An FAD-binding site is contributed by 49 to 54 (GAGPAG). 226-231 (GCGNSG) is a binding site for NADP(+).

It belongs to the FMO family. It depends on FAD as a cofactor.

It catalyses the reaction indole-3-pyruvate + NADPH + O2 + H(+) = (indol-3-yl)acetate + CO2 + NADP(+) + H2O. Involved in auxin biosynthesis in anthers. In Oryza sativa subsp. japonica (Rice), this protein is Indole-3-pyruvate monooxygenase YUCCA4.